We begin with the raw amino-acid sequence, 25 residues long: Bioremediase (25 aa).

Residues 1 to 25 form the Alpha-carbonic anhydrase domain; it reads DFPIANGERQSPVDIDTKAVVQDPA. Residues 1–25 form a disordered region; sequence DFPIANGERQSPVDIDTKAVVQDPA.

The protein belongs to the alpha-carbonic anhydrase family. The cofactor is Zn(2+).

Releases silica from silica-rich substances. This Thermoanaerobacter sp protein is Bioremediase.